The primary structure comprises 815 residues: (E)-gamma-bisabolene synthase (815 aa).

The Mg(2+) site is built by Asp561, Asp565, Asp709, and Glu717. A DDXXD motif motif is present at residues 561–565; sequence DDMYD.

This sequence belongs to the terpene synthase family. Tpsd subfamily. Requires Mg(2+) as cofactor. The cofactor is Mn(2+).

Its subcellular location is the cytoplasm. The catalysed reaction is (2E,6E)-farnesyl diphosphate = (E)-gamma-bisabolene + diphosphate. It functions in the pathway terpene metabolism; oleoresin biosynthesis. In terms of biological role, involved in defensive oleoresin formation in conifers in response to insect attack or other injury. Involved in sesquiterpene (C15) olefins biosynthesis. Produces mainly (E)-gamma-bisabolene when used with farnesyl diphosphate as substrate. No activity with geranyl diphosphate or geranylgeranyl diphosphate. The sequence is that of (E)-gamma-bisabolene synthase (TPS3) from Pseudotsuga menziesii (Douglas-fir).